The following is a 117-amino-acid chain: Large ribosomal subunit protein bL20 (117 aa).

Belongs to the bacterial ribosomal protein bL20 family.

Binds directly to 23S ribosomal RNA and is necessary for the in vitro assembly process of the 50S ribosomal subunit. It is not involved in the protein synthesizing functions of that subunit. This is Large ribosomal subunit protein bL20 from Mannheimia succiniciproducens (strain KCTC 0769BP / MBEL55E).